Reading from the N-terminus, the 541-residue chain is DEAD-box ATP-dependent RNA helicase 57 (541 aa).

Residues 43 to 52 (VEEEEDTEQP) are compositionally biased toward acidic residues. The tract at residues 43–72 (VEEEEDTEQPEAEKVIVSSKKRKRRSSNSV) is disordered. Residues 141-169 (ELSSRYGCEGYILRNLAELGFKEPTPIQR) carry the Q motif motif. In terms of domain architecture, Helicase ATP-binding spans 172-342 (IPILLSGREC…RSIMHDAVRV (171 aa)). 185-192 (APTGSGKT) contributes to the ATP binding site. Residues 289-292 (DESD) carry the DEAD box motif. One can recognise a Helicase C-terminal domain in the interval 370 to 514 (ALRQSFAESL…EVPSWIMSLK (145 aa)). Residues 517–541 (KWRKHRPRRDSISTKPKADKNDTDE) are disordered. Residues 525 to 541 (RDSISTKPKADKNDTDE) show a composition bias toward basic and acidic residues.

The protein belongs to the DEAD box helicase family. DDX52/ROK1 subfamily.

The enzyme catalyses ATP + H2O = ADP + phosphate + H(+). The protein is DEAD-box ATP-dependent RNA helicase 57 (RH57) of Arabidopsis thaliana (Mouse-ear cress).